The chain runs to 507 residues: ATP synthase subunit alpha (507 aa).

170-177 (GDRKTGKT) lines the ATP pocket.

This sequence belongs to the ATPase alpha/beta chains family. F-type ATPases have 2 components, CF(1) - the catalytic core - and CF(0) - the membrane proton channel. CF(1) has five subunits: alpha(3), beta(3), gamma(1), delta(1), epsilon(1). CF(0) has three main subunits: a(1), b(2) and c(9-12). The alpha and beta chains form an alternating ring which encloses part of the gamma chain. CF(1) is attached to CF(0) by a central stalk formed by the gamma and epsilon chains, while a peripheral stalk is formed by the delta and b chains.

The protein localises to the cell inner membrane. The enzyme catalyses ATP + H2O + 4 H(+)(in) = ADP + phosphate + 5 H(+)(out). In terms of biological role, produces ATP from ADP in the presence of a proton gradient across the membrane. The alpha chain is a regulatory subunit. The polypeptide is ATP synthase subunit alpha (Anaplasma marginale (strain Florida)).